Consider the following 486-residue polypeptide: Glutamyl-tRNA(Gln) amidotransferase subunit A (486 aa).

Residues lysine 77 and serine 152 each act as charge relay system in the active site. Serine 176 functions as the Acyl-ester intermediate in the catalytic mechanism.

This sequence belongs to the amidase family. GatA subfamily. In terms of assembly, heterotrimer of A, B and C subunits.

It carries out the reaction L-glutamyl-tRNA(Gln) + L-glutamine + ATP + H2O = L-glutaminyl-tRNA(Gln) + L-glutamate + ADP + phosphate + H(+). Allows the formation of correctly charged Gln-tRNA(Gln) through the transamidation of misacylated Glu-tRNA(Gln) in organisms which lack glutaminyl-tRNA synthetase. The reaction takes place in the presence of glutamine and ATP through an activated gamma-phospho-Glu-tRNA(Gln). The sequence is that of Glutamyl-tRNA(Gln) amidotransferase subunit A from Pediococcus pentosaceus (strain ATCC 25745 / CCUG 21536 / LMG 10740 / 183-1w).